Consider the following 695-residue polypeptide: Probable glucan endo-1,3-beta-glucosidase btgC (695 aa).

Disordered regions lie at residues 1-53 (MSGP…THHG), 117-140 (RRGTDGQEANIPAERGYNTTGSDN), 175-258 (GPAG…RSQA), and 286-314 (ETSYDPVPGAGLEAGEKSQWVKPKPSTGS). At 1-317 (MSGPHRTFSF…PKPSTGSRKR (317 aa)) the chain is on the cytoplasmic side. The span at 36–45 (PISNMSSSPG) shows a compositional bias: polar residues. Residues 188–198 (HLGTSNSSQRN) are compositionally biased toward polar residues. Over residues 231 to 241 (NPEEIADDGDD) the composition is skewed to acidic residues. A helical; Signal-anchor for type II membrane protein membrane pass occupies residues 318–338 (GWIIGAILAVIIIGAIVGGAV). The Extracellular portion of the chain corresponds to 339–695 (GGTIGHKDSG…IPDCGGKTAA (357 aa)). Residues 346–372 (DSGDSASGSSASTQSASGDTDTNGDLD) are disordered. Positions 349 to 366 (DSASGSSASTQSASGDTD) are enriched in low complexity. Asn-415, Asn-438, and Asn-466 each carry an N-linked (GlcNAc...) asparagine glycan. Glu-498 acts as the Proton donor in catalysis. Glu-597 functions as the Nucleophile in the catalytic mechanism. An N-linked (GlcNAc...) asparagine glycan is attached at Asn-642.

The protein belongs to the glycosyl hydrolase 17 family.

Its subcellular location is the cell membrane. The catalysed reaction is Hydrolysis of (1-&gt;3)-beta-D-glucosidic linkages in (1-&gt;3)-beta-D-glucans.. Its function is as follows. Glucanases play a role in cell expansion during growth, in cell-cell fusion during mating, and in spore release during sporulation. This enzyme may be involved in beta-glucan degradation. Active on laminarin and lichenan. In Aspergillus clavatus (strain ATCC 1007 / CBS 513.65 / DSM 816 / NCTC 3887 / NRRL 1 / QM 1276 / 107), this protein is Probable glucan endo-1,3-beta-glucosidase btgC (btgC).